The primary structure comprises 287 residues: Ribosomal RNA small subunit methyltransferase A (287 aa).

S-adenosyl-L-methionine contacts are provided by N28, L30, G55, E77, D103, and N123.

The protein belongs to the class I-like SAM-binding methyltransferase superfamily. rRNA adenine N(6)-methyltransferase family. RsmA subfamily.

Its subcellular location is the cytoplasm. It carries out the reaction adenosine(1518)/adenosine(1519) in 16S rRNA + 4 S-adenosyl-L-methionine = N(6)-dimethyladenosine(1518)/N(6)-dimethyladenosine(1519) in 16S rRNA + 4 S-adenosyl-L-homocysteine + 4 H(+). Specifically dimethylates two adjacent adenosines (A1518 and A1519) in the loop of a conserved hairpin near the 3'-end of 16S rRNA in the 30S particle. May play a critical role in biogenesis of 30S subunits. This chain is Ribosomal RNA small subunit methyltransferase A, found in Rhodopseudomonas palustris (strain TIE-1).